A 244-amino-acid chain; its full sequence is 1-(5-phosphoribosyl)-5-[(5-phosphoribosylamino)methylideneamino] imidazole-4-carboxamide isomerase (244 aa).

Asp-10 (proton acceptor) is an active-site residue. Asp-129 serves as the catalytic Proton donor.

Belongs to the HisA/HisF family.

The protein resides in the cytoplasm. It catalyses the reaction 1-(5-phospho-beta-D-ribosyl)-5-[(5-phospho-beta-D-ribosylamino)methylideneamino]imidazole-4-carboxamide = 5-[(5-phospho-1-deoxy-D-ribulos-1-ylimino)methylamino]-1-(5-phospho-beta-D-ribosyl)imidazole-4-carboxamide. Its pathway is amino-acid biosynthesis; L-histidine biosynthesis; L-histidine from 5-phospho-alpha-D-ribose 1-diphosphate: step 4/9. This is 1-(5-phosphoribosyl)-5-[(5-phosphoribosylamino)methylideneamino] imidazole-4-carboxamide isomerase from Rhodococcus erythropolis (strain PR4 / NBRC 100887).